The primary structure comprises 150 residues: Ribosome maturation factor RimP (150 aa).

The protein belongs to the RimP family.

It is found in the cytoplasm. Required for maturation of 30S ribosomal subunits. This chain is Ribosome maturation factor RimP, found in Yersinia pestis bv. Antiqua (strain Antiqua).